Consider the following 255-residue polypeptide: Coenzyme F420:L-glutamate ligase (255 aa).

GTP is bound by residues 11-14 (IPLI), 40-41 (ST), and Lys-45. A divalent metal cation is bound at residue Asp-109. Asn-112 is a GTP binding site. Residues Asp-150, Thr-151, and Glu-208 each coordinate a divalent metal cation. 206 to 213 (MGEGAGGT) is a GTP binding site.

It belongs to the CofE family. Homodimer. Mg(2+) is required as a cofactor. It depends on Mn(2+) as a cofactor. Requires K(+) as cofactor.

The catalysed reaction is oxidized coenzyme F420-0 + GTP + L-glutamate = oxidized coenzyme F420-1 + GDP + phosphate + H(+). It carries out the reaction oxidized coenzyme F420-1 + GTP + L-glutamate = oxidized coenzyme F420-2 + GDP + phosphate + H(+). Its pathway is cofactor biosynthesis; coenzyme F420 biosynthesis. In terms of biological role, catalyzes the GTP-dependent successive addition of two or more gamma-linked L-glutamates to the L-lactyl phosphodiester of 7,8-didemethyl-8-hydroxy-5-deazariboflavin (F420-0) to form coenzyme F420-0-glutamyl-glutamate (F420-2) or polyglutamated F420 derivatives. This chain is Coenzyme F420:L-glutamate ligase, found in Methanosarcina barkeri (strain Fusaro / DSM 804).